The primary structure comprises 327 residues: Probable cell division protein WhiA (327 aa).

Positions 275–308 (SLEELGRLADPPMTKDAVAGRIRRLLSMADRKAK) form a DNA-binding region, H-T-H motif.

This sequence belongs to the WhiA family.

Its function is as follows. Involved in cell division and chromosome segregation. The polypeptide is Probable cell division protein WhiA (Mycobacterium marinum (strain ATCC BAA-535 / M)).